The chain runs to 526 residues: Probable lipid II flippase MurJ (526 aa).

The next 14 helical transmembrane spans lie at 35–55 (LMGT…PNLF), 58–78 (LFAE…HYSM), 96–116 (AIFT…ILGA), 137–157 (MFPY…LHSI), 160–180 (FVPS…SMYF), 190–210 (IAAA…QLIF), 235–255 (IIAL…NDLV), 281–301 (LLGI…SFHV), 313–333 (LITA…FVLF), 362–382 (WHSV…AFYA), 391–411 (IAGT…FIPL), 415–435 (GIAF…WMFL), 459–479 (LFSV…AYFF), and 489–509 (GVPL…LLLL).

This sequence belongs to the MurJ/MviN family.

Its subcellular location is the cell inner membrane. It functions in the pathway cell wall biogenesis; peptidoglycan biosynthesis. Its function is as follows. Involved in peptidoglycan biosynthesis. Transports lipid-linked peptidoglycan precursors from the inner to the outer leaflet of the cytoplasmic membrane. The polypeptide is Probable lipid II flippase MurJ (Treponema pallidum (strain Nichols)).